Consider the following 233-residue polypeptide: MMPRLQQHKIILRQLGLQPYAPVSQAMHNFTEFRTDTTPDEIWLVEHQHVFTQGQAGKAEHVLMPGDIPVIQSDRGGQITYHGPGQQVMYVMVDLKRAKIGVRQLVTAIENTVIETLAHFNIDSHARPDAPGVYVEQQKICSLGLRIRRGCSFHGLALNIAMDLEPFQRINPCGYAGMQMTQVSALQPGVTVADVQPVLVREFTRQLGYPTAKLQPWSLSDYLLSSHSSSSVL.

The BPL/LPL catalytic domain occupies 36 to 211; that stretch reads DTTPDEIWLV…EFTRQLGYPT (176 aa). Substrate is bound by residues 75–82, 142–144, and 155–157; these read RGGQITYH, SLG, and GLA. Residue C173 is the Acyl-thioester intermediate of the active site.

The protein belongs to the LipB family.

Its subcellular location is the cytoplasm. The enzyme catalyses octanoyl-[ACP] + L-lysyl-[protein] = N(6)-octanoyl-L-lysyl-[protein] + holo-[ACP] + H(+). The protein operates within protein modification; protein lipoylation via endogenous pathway; protein N(6)-(lipoyl)lysine from octanoyl-[acyl-carrier-protein]: step 1/2. In terms of biological role, catalyzes the transfer of endogenously produced octanoic acid from octanoyl-acyl-carrier-protein onto the lipoyl domains of lipoate-dependent enzymes. Lipoyl-ACP can also act as a substrate although octanoyl-ACP is likely to be the physiological substrate. This is Octanoyltransferase from Yersinia pseudotuberculosis serotype O:1b (strain IP 31758).